A 385-amino-acid polypeptide reads, in one-letter code: AA13 family lytic polysaccharide monooxygenase aasA (385 aa).

A signal peptide spans 1-18 (MKSLLALVAGNLVTAVSG). Histidine 19 is a Cu(2+) binding site. Position 19 is a methylhistidine (histidine 19). The N-terminal catalytic module stretch occupies residues 19-248 (HGYLTVPASR…AQVYLHCADI (230 aa)). Intrachain disulfides connect cysteine 40/cysteine 43, cysteine 66/cysteine 245, cysteine 102/cysteine 203, cysteine 118/cysteine 145, cysteine 153/cysteine 161, cysteine 167/cysteine 173, and cysteine 181/cysteine 192. Position 109 (histidine 109) interacts with Cu(2+). N-linked (GlcNAc...) asparagine glycosylation is present at asparagine 120. Tyrosine 242 lines the Cu(2+) pocket. Residues 254–276 (SGSSPSPTSTTSTATSTTTPSST) form a disordered region. The segment covering 256–276 (SSPSPTSTTSTATSTTTPSST) has biased composition (low complexity). The 108-residue stretch at 278 to 385 (CASAISIPVT…TTATESGAWR (108 aa)) folds into the CBM20 domain. N-linked (GlcNAc...) asparagine glycosylation is present at asparagine 364.

It belongs to the polysaccharide monooxygenase AA13 family. The cofactor is Cu(2+). In terms of processing, the catalytically essential N-terminal histidine His-19 is post-translationally modified by methylation to prevent protonation of the histidine side chain, and protect the critical active site of the enzyme from oxidative damage.

It localises to the secreted. It carries out the reaction starch + reduced acceptor + O2 = D-glucono-1,5-lactone-terminated malto-oligosaccharides + short-chain malto-oligosaccharides + acceptor + H2O.. Starch-active polysaccharide monooxygenase that oxidizes the C1 position of starch substrates, but not in cellulose, chitin, polygalacturonan or esterified pectin, nor with Arabidopsis stem cell walls. Catalysis by LPMOs requires the reduction of the active-site copper from Cu(II) to Cu(I) by a reducing agent and H(2)O(2) or O(2) as a cosubstrate. The chain is AA13 family lytic polysaccharide monooxygenase aasA from Emericella nidulans (strain FGSC A4 / ATCC 38163 / CBS 112.46 / NRRL 194 / M139) (Aspergillus nidulans).